The primary structure comprises 543 residues: Chaperonin GroEL 2 (543 aa).

Residues 29–32 (TLGP), 86–90 (DGTTT), Gly-413, 479–481 (NAA), and Asp-495 each bind ATP.

It belongs to the chaperonin (HSP60) family. As to quaternary structure, forms a cylinder of 14 subunits composed of two heptameric rings stacked back-to-back. Interacts with the co-chaperonin GroES.

The protein localises to the cytoplasm. It carries out the reaction ATP + H2O + a folded polypeptide = ADP + phosphate + an unfolded polypeptide.. Together with its co-chaperonin GroES, plays an essential role in assisting protein folding. The GroEL-GroES system forms a nano-cage that allows encapsulation of the non-native substrate proteins and provides a physical environment optimized to promote and accelerate protein folding. This is Chaperonin GroEL 2 from Synechococcus sp. (strain CC9311).